The following is a 450-amino-acid chain: MNQTDTSPIRLRRSWNTSEIEALFDEHAGRIDPRIYTDEDLYQLELERVFARSWLLLGHETQIRKPGDYITTYMGEDPVVVVRQKDASIAVFLNQCRHRGMRICRADAGNAKAFTCSYHGWAYDTAGNLVNVPYEAESFACLNKKEWSPLKARVETYKGLIFANWDENAVDLDTYLGEAKFYMDHMLDRTEAGTEAIPGVQKWVIPCNWKFAAEQFCSDMYHAGTTSHLSGILAGLPEDLEMADLAPPTVGKQYRASWGGHGSGFYVGDPNLMLAIMGPKVTSYWTEGPASEKAAERLGSVERGSKLMVEHMTVFPTCSFLPGINTVRTWHPRGPNEVEVWAFTVVDADAPDDIKEEFRRQTLRTFSAGGVFEQDDGENWVEIQHILRGHKARSRPFNAEMSMDQTVDNDPVYPGRISNNVYSEEAARGLYAHWLRMMTSPDWDALKATR.

One can recognise a Rieske domain in the interval 54 to 163 (WLLLGHETQI…VETYKGLIFA (110 aa)). The [2Fe-2S] cluster site is built by C96, H98, C116, and H119. The Fe cation site is built by H222 and H228.

This sequence belongs to the bacterial ring-hydroxylating dioxygenase alpha subunit family. In terms of assembly, this dioxygenase system consists of four proteins: the two subunits of the hydroxylase component (BnzA and BnzB), a ferredoxin (BnzC) and a ferredoxin reductase (BnzD). [2Fe-2S] cluster serves as cofactor. Fe cation is required as a cofactor.

It catalyses the reaction benzene + NADH + O2 + H(+) = cis-1,2-dihydrobenzene-1,2-diol + NAD(+). The catalysed reaction is toluene + NADH + O2 + H(+) = (1S,2R)-3-methylcyclohexa-3,5-diene-1,2-diol + NAD(+). It functions in the pathway aromatic compound metabolism; benzene degradation; catechol from benzene: step 1/2. The protein operates within xenobiotic degradation; toluene degradation. It participates in xenobiotic degradation; xylene degradation. Functionally, catalyzes both the oxidation of benzene and toluene. This Pseudomonas putida (strain ATCC 700007 / DSM 6899 / JCM 31910 / BCRC 17059 / LMG 24140 / F1) protein is Benzene 1,2-dioxygenase subunit alpha (bnzA).